The chain runs to 178 residues: Adenine phosphoribosyltransferase (178 aa).

It belongs to the purine/pyrimidine phosphoribosyltransferase family. Homodimer.

The protein resides in the cytoplasm. It catalyses the reaction AMP + diphosphate = 5-phospho-alpha-D-ribose 1-diphosphate + adenine. It functions in the pathway purine metabolism; AMP biosynthesis via salvage pathway; AMP from adenine: step 1/1. Its function is as follows. Catalyzes a salvage reaction resulting in the formation of AMP, that is energically less costly than de novo synthesis. This chain is Adenine phosphoribosyltransferase, found in Streptomyces clavuligerus.